Reading from the N-terminus, the 445-residue chain is Mitochondrial enolase superfamily member 1 (445 aa).

Residues 24-26, Y34, and K220 each bind substrate; that span reads GSD. The active-site Proton donor/acceptor is K222. D250 serves as a coordination point for Mg(2+). Substrate-binding positions include N252, E276, E305, 355 to 357, and E386; that span reads HAG. E276 and E305 together coordinate Mg(2+). Residue H355 is part of the active site.

This sequence belongs to the mandelate racemase/muconate lactonizing enzyme family. ENOSF1 subfamily. Requires Mg(2+) as cofactor.

It is found in the mitochondrion. The enzyme catalyses L-fuconate = 2-dehydro-3-deoxy-L-fuconate + H2O. Plays a role in the catabolism of L-fucose, a sugar that is part of the carbohydrates that are attached to cellular glycoproteins. Catalyzes the dehydration of L-fuconate to 2-keto-3-deoxy-L-fuconate by the abstraction of the 2-proton to generate an enediolate intermediate that is stabilized by the magnesium ion. May down-regulate thymidylate synthase activity, possibly already at the RNA level, by promoting the degradation of TYMS mRNA via an antisense RNA-based mechanism. This is Mitochondrial enolase superfamily member 1 (enosf1) from Xenopus laevis (African clawed frog).